Reading from the N-terminus, the 283-residue chain is MPELPEVETVRRGLNQLTLNRKITGGDVLLHRTIAHPFSVGDFLNGITGSTISTWHRRGKYLLAELSASPSTTSIPWLGVHLRMTGQLLWLNQDEPLHKHTRVRIFFEEEQELRFVDQRTFGQMWWVPPGIAVESVITGLAKLAVDPFSPEFTVEYLANKLHNRRRPIKTALLDQSVVAGLGNIYADEALFKSGVLPETLCTEVQLKQIKLLRTAIIQVLETSIEAGGTTFSNFLNVKGVNGNYGGVAWVYNRAGEPCKVCGDVIQRIKLGGRSSHFCRQCQV.

The Schiff-base intermediate with DNA role is filled by P2. E3 acts as the Proton donor in catalysis. K60 acts as the Proton donor; for beta-elimination activity in catalysis. H100, R119, and R164 together coordinate DNA. The FPG-type zinc finger occupies 249–283; the sequence is WVYNRAGEPCKVCGDVIQRIKLGGRSSHFCRQCQV. Residue R273 is the Proton donor; for delta-elimination activity of the active site.

The protein belongs to the FPG family. In terms of assembly, monomer. It depends on Zn(2+) as a cofactor.

The enzyme catalyses Hydrolysis of DNA containing ring-opened 7-methylguanine residues, releasing 2,6-diamino-4-hydroxy-5-(N-methyl)formamidopyrimidine.. It catalyses the reaction 2'-deoxyribonucleotide-(2'-deoxyribose 5'-phosphate)-2'-deoxyribonucleotide-DNA = a 3'-end 2'-deoxyribonucleotide-(2,3-dehydro-2,3-deoxyribose 5'-phosphate)-DNA + a 5'-end 5'-phospho-2'-deoxyribonucleoside-DNA + H(+). Its function is as follows. Involved in base excision repair of DNA damaged by oxidation or by mutagenic agents. Acts as a DNA glycosylase that recognizes and removes damaged bases. Has a preference for oxidized purines, such as 7,8-dihydro-8-oxoguanine (8-oxoG). Has AP (apurinic/apyrimidinic) lyase activity and introduces nicks in the DNA strand. Cleaves the DNA backbone by beta-delta elimination to generate a single-strand break at the site of the removed base with both 3'- and 5'-phosphates. The sequence is that of Formamidopyrimidine-DNA glycosylase from Nostoc sp. (strain PCC 7120 / SAG 25.82 / UTEX 2576).